The primary structure comprises 88 residues: Small ribosomal subunit protein uS19 (88 aa).

This sequence belongs to the universal ribosomal protein uS19 family.

Its function is as follows. Protein S19 forms a complex with S13 that binds strongly to the 16S ribosomal RNA. This is Small ribosomal subunit protein uS19 (rpsS) from Chlamydia pneumoniae (Chlamydophila pneumoniae).